A 69-amino-acid chain; its full sequence is Brevinin-1CG1 (69 aa).

An N-terminal signal peptide occupies residues 1–22 (MFTMKKSLLLLFFLGTINLSLC). A propeptide spans 23–43 (EQERNAEEERRDDDEMDVEVE) (removed in mature form). Cysteine 63 and cysteine 69 are oxidised to a cystine.

Expressed by the skin glands.

It is found in the secreted. Functionally, antimicrobial peptide. Active against Gram-positive bacteria R.rhodochrous X15 and B.licheniformis X39 and against Gram-negative bacterium E.coli ATCC 25922. Has antifungal activity against a slime mold isolate. Has weak hemolytic activity against human erythrocytes. This is Brevinin-1CG1 from Amolops chunganensis (Chungan torrent frog).